Consider the following 268-residue polypeptide: Tryptophan synthase alpha chain (268 aa).

Catalysis depends on proton acceptor residues E49 and D60.

It belongs to the TrpA family. As to quaternary structure, tetramer of two alpha and two beta chains.

It carries out the reaction (1S,2R)-1-C-(indol-3-yl)glycerol 3-phosphate + L-serine = D-glyceraldehyde 3-phosphate + L-tryptophan + H2O. Its pathway is amino-acid biosynthesis; L-tryptophan biosynthesis; L-tryptophan from chorismate: step 5/5. The alpha subunit is responsible for the aldol cleavage of indoleglycerol phosphate to indole and glyceraldehyde 3-phosphate. The sequence is that of Tryptophan synthase alpha chain from Salmonella typhimurium (strain LT2 / SGSC1412 / ATCC 700720).